The chain runs to 89 residues: Probable Fe(2+)-trafficking protein (89 aa).

This sequence belongs to the Fe(2+)-trafficking protein family.

Could be a mediator in iron transactions between iron acquisition and iron-requiring processes, such as synthesis and/or repair of Fe-S clusters in biosynthetic enzymes. The polypeptide is Probable Fe(2+)-trafficking protein (Stenotrophomonas maltophilia (strain R551-3)).